A 167-amino-acid polypeptide reads, in one-letter code: Translationally-controlled tumor protein homolog (167 aa).

Residues 1 to 167 (MIIYTDIISG…WKHGVKAEKI (167 aa)) form the TCTP domain.

This sequence belongs to the TCTP family.

Its subcellular location is the cytoplasm. It localises to the cytoskeleton. Its function is as follows. Involved in protein synthesis. Involved in microtubule stabilization. The sequence is that of Translationally-controlled tumor protein homolog from Kluyveromyces lactis (strain ATCC 8585 / CBS 2359 / DSM 70799 / NBRC 1267 / NRRL Y-1140 / WM37) (Yeast).